The primary structure comprises 612 residues: Cryptochrome-2 (612 aa).

Positions 1–485 (MKMDKKTIVW…TARELLAKAI (485 aa)) are CNT2, binds chromophores to sense blue light and mediate CRY dimerization. Residues 5–134 (KKTIVWFRRD…SVQSYNGDLL (130 aa)) enclose the Photolyase/cryptochrome alpha/beta domain. An FAD-binding site is contributed by Tyr-232. Mg(2+) is bound by residues Asn-235 and Ser-243. 244–248 (TSLLS) serves as a coordination point for FAD. His-355 is a binding site for Mg(2+). FAD contacts are provided by residues Asn-356 and 387–389 (DAD). Residue 356 to 357 (NR) coordinates ATP. Asp-406 is a binding site for ATP. The interval 486 to 612 (SRTREAQIMI…TTSLGKNGCK (127 aa)) is CCT2/CCE2, mediates blue light signaling. Residues 539–576 (GSKRVKPEEEEERDMKKSRGFDERELFSTAESSSSSSV) are disordered. The Nuclear localization signal signature appears at 541–555 (KRVKPEEEEERDMKK). Basic and acidic residues predominate over residues 551–564 (RDMKKSRGFDEREL). Ser-587 is modified (phosphoserine; by CK1). The disordered stretch occupies residues 590 to 612 (KNLEGIQDSSDQITTSLGKNGCK). Polar residues predominate over residues 596–612 (QDSSDQITTSLGKNGCK). Residues Ser-598 and Ser-599 each carry the phosphoserine modification. Position 603 is a phosphothreonine; by CK1 (Thr-603). Ser-605 is modified (phosphoserine).

It belongs to the DNA photolyase class-1 family. In terms of assembly, homodimer. Blue-light dependent dimerization. Interacts with COP1 and PHYB in the nucleus. Binds reversibly to CIBs proteins such as BHLH63/CIB1, BHLH78/CIB2, BHLH74/CIB4 and BHLH76/CIB5 after blue light illumination to stimulate their transcription factor activities. Interacts with PIF4 and PIF5 in the nucleus in response to low blue light (LBL). Binds to SPA1 in response to blue light, this interaction prevents SPA1/COP1 complex formation but stimulates interaction with COP1, and thus avoid COP1-dependent degradation of the transcription factors CO and HY5 by the proteasome and promotes hypocotyl elongation and floral initiation. Binding to ATP mediates conformational changes which facilitate flavin binding. Interacts with BIC1 in both darkness and light. Interacts with NRP. Requires FAD as cofactor. (6R)-5,10-methylene-5,6,7,8-tetrahydrofolate is required as a cofactor. Phosphorylated by CK1.3 and CK1.4; in response to blue light. Required for degradation. Adopts an open conformation when phosphorylated upon photoexcitation and thus interacts with signaling partner proteins. Not autophosphorylated, even in complex with FAD cofactor. In terms of processing, ubiquitinated; in response to blue light. In terms of tissue distribution, mostly expressed in the shoot meristems and root tips, and, to a lower extent, in the cotyledons, hypocotyls, and roots.

It localises to the nucleus. Its subcellular location is the PML body. It is found in the cytoplasm. Photoreceptor that mediates primarily blue light inhibition of hypocotyl elongation and photoperiodic control of floral initiation, and regulates other light responses, including circadian rhythms, tropic growth, stomata opening, guard cell development, root development, bacterial and viral pathogen responses, abiotic stress responses, cell cycles, programmed cell death, apical dominance, fruit and ovule development, seed dormancy, and magnetoreception. Photoexcited cryptochromes interact with signaling partner proteins to alter gene expression at both transcriptional and post-translational levels and, consequently, regulate the corresponding metabolic and developmental programs. Blue-light absorbing flavoprotein that activates reversible flavin photoreduction via an electron transport chain comprising a tryptophan triad (W-321, W-374 and W-397), or via an alternative electron transport that involves small metabolites, including NADPH, NADH, and ATP. The half-life of the activated signaling state is about 16 minutes. Perceives low blue light (LBL) and responds by directly contacting two bHLH transcription factors, PIF4 and PIF5, at chromatin on E-box variant 5'-CA[CT]GTG-3' to promote their activity and stimulate specific gene expression to adapt global physiology (e.g. hypocotyl elongation and hyponastic growth in low blue light). In response to blue light, binds to CIB proteins (e.g. BHLH63/CIB1 and BHLH76/CIB5) to activate transcription and floral initiation. Mediates blue light-induced gene expression, floral initiation and hypocotyl elongation through the interaction with SPA1 that prevents formation of SPA1/COP1 complex but stimulates COP1 binding, and thus inhibits COP1-mediated degradation of transcription factors (e.g. CO and HY5). Promotes flowering time in continuous light (LL). Involved in shortening the circadian clock period, especially at 27 degrees Celsius, in blue light (BL). Required to maintain clock genes expression rhythm. Triggers nuclear accumulation of ROS in response to blue light illumination. Involved in blue light-dependent stomatal opening, transpiration and inhibition of stem and root growth, probably by regulating abscisic acid (ABA). Regulates the timing of flowering by promoting the expression of 'FLOWERING LOCUS T' (FT) in vascular bundles. Negatively regulated by 'FLOWERING LOCUS C' (FLC). General positive regulator of reversible low light-induced chromatin decompaction. Involved in triggering chromatin decondensation during floral transition. Together with phototropins, involved in phototropism regulation by various blue light fluence; blue light attenuates phototropism in high fluence rates (100 umol.m-2.s-1) but enhances phototropism in low fluence rates (&lt;1.0 umol.m-2.s-1). The effect of near-null magnetic field on flowering is altered by changes of blue light cycle and intensity in a CRY1/CRY2-dependent manner. Involved in the strigolactone signaling that regulates hypocotyl growth in response to blue light. Functionally, confers resistance to turnip crinkle virus (TCV) by preventing COP1-mediated proteasome-mediated degradation of RPP8/HRT, thus promoting its stability in light. Exposure to darkness or blue-light induces degradation of CRY2, and in turn of RPP8/HRT, resulting in susceptibility to TCV. This chain is Cryptochrome-2, found in Arabidopsis thaliana (Mouse-ear cress).